Consider the following 66-residue polypeptide: Large ribosomal subunit protein bL35 (66 aa).

Positions Met1–Arg16 are enriched in basic residues. The tract at residues Met1 to Gly20 is disordered.

This sequence belongs to the bacterial ribosomal protein bL35 family.

This is Large ribosomal subunit protein bL35 from Lactococcus lactis subsp. lactis (strain IL1403) (Streptococcus lactis).